We begin with the raw amino-acid sequence, 234 residues long: Segregation and condensation protein A (234 aa).

The protein belongs to the ScpA family. Component of a cohesin-like complex composed of ScpA, ScpB and the Smc homodimer, in which ScpA and ScpB bind to the head domain of Smc. The presence of the three proteins is required for the association of the complex with DNA.

Its subcellular location is the cytoplasm. In terms of biological role, participates in chromosomal partition during cell division. May act via the formation of a condensin-like complex containing Smc and ScpB that pull DNA away from mid-cell into both cell halves. This Streptococcus pyogenes serotype M18 (strain MGAS8232) protein is Segregation and condensation protein A.